The chain runs to 132 residues: Small ribosomal subunit protein uS8 (132 aa).

The protein belongs to the universal ribosomal protein uS8 family. As to quaternary structure, part of the 30S ribosomal subunit. Contacts proteins S5 and S12.

Its function is as follows. One of the primary rRNA binding proteins, it binds directly to 16S rRNA central domain where it helps coordinate assembly of the platform of the 30S subunit. The polypeptide is Small ribosomal subunit protein uS8 (Nitrobacter winogradskyi (strain ATCC 25391 / DSM 10237 / CIP 104748 / NCIMB 11846 / Nb-255)).